The sequence spans 474 residues: Probable glycine dehydrogenase (decarboxylating) subunit 2 (474 aa).

An N6-(pyridoxal phosphate)lysine modification is found at Lys262.

The protein belongs to the GcvP family. C-terminal subunit subfamily. In terms of assembly, the glycine cleavage system is composed of four proteins: P, T, L and H. In this organism, the P 'protein' is a heterodimer of two subunits. The cofactor is pyridoxal 5'-phosphate.

The catalysed reaction is N(6)-[(R)-lipoyl]-L-lysyl-[glycine-cleavage complex H protein] + glycine + H(+) = N(6)-[(R)-S(8)-aminomethyldihydrolipoyl]-L-lysyl-[glycine-cleavage complex H protein] + CO2. The glycine cleavage system catalyzes the degradation of glycine. The P protein binds the alpha-amino group of glycine through its pyridoxal phosphate cofactor; CO(2) is released and the remaining methylamine moiety is then transferred to the lipoamide cofactor of the H protein. This Thermotoga petrophila (strain ATCC BAA-488 / DSM 13995 / JCM 10881 / RKU-1) protein is Probable glycine dehydrogenase (decarboxylating) subunit 2.